A 1141-amino-acid polypeptide reads, in one-letter code: Serine-aspartate repeat-containing protein E (1141 aa).

Positions 1–52 (MINRDNKKAITKKGMISNRLNKFSIRKYTVGTASILVGTTLIFGLGNQEAKA) are cleaved as a signal peptide. Residues 23–34 (FSIRKYTVGTAS) carry the YSIRK-G/S signaling motif motif. Residues 53–601 (AENTSTENAK…GDGTVKPEEK (549 aa)) form a ligand binding A region region. The tract at residues 54 to 248 (ENTSTENAKQ…RSTKPVATAP (195 aa)) is disordered. The span at 61 to 75 (AKQDDATTSDNKEVV) shows a compositional bias: basic and acidic residues. Over residues 77 to 90 (ETENNSTTENDSTN) the composition is skewed to low complexity. Basic and acidic residues predominate over residues 92–108 (IKKETNTDSQPEAKEES). Over residues 109-126 (TTSSTQQQQNNVTATTET) the composition is skewed to low complexity. Residues 130–145 (NIEKENVKPSTDKTAT) are compositionally biased toward basic and acidic residues. Positions 159–207 (NYTNNDVTTKPSTSEIQTKPTTPQESTNIENSQPQPTPSKVDNQVTDAT) are enriched in polar residues. Residues 216 to 241 (SKEELKNNPEKLKELVRNDNNTDRST) show a composition bias toward basic and acidic residues. CNA-B domains lie at 602-714 (LYKI…YKEP), 715-824 (KYNL…YKTP), and 825-935 (KYSL…EEDT). The segment at 899-1117 (VTNTTEDDKD…GSENNGSNNA (219 aa)) is disordered. Acidic residues-rich tracts occupy residues 903–913 (TEDDKDADGGE) and 930–1080 (YFEE…DSDS). Residues 1104 to 1108 (LPETG) carry the LPXTG sorting signal motif. Thr1107 is modified (pentaglycyl murein peptidoglycan amidated threonine). Residues 1108 to 1141 (GSENNGSNNATLFGGLFAALGSLLLFGRRKKQNK) constitute a propeptide, removed by sortase.

This sequence belongs to the serine-aspartate repeat-containing protein (SDr) family. As to quaternary structure, interacts with host complement factor H/CFAH (via C-terminus). Interacts with host complement regulator C4BPA.

Its subcellular location is the secreted. The protein resides in the cell wall. Functionally, cell surface-associated calcium-binding protein which plays an important role in adhesion and pathogenesis. Contributes to the resistance to killing by innate immune components in blood and thus attenuates bacterial clearance by interacting with host complement factor H/CFAH and modulating its activity. Also inhibits bacterial opsonization and killing by interacting with host complement regulator C4BPA and thus inhibiting classical complement pathway activation. This chain is Serine-aspartate repeat-containing protein E (sdrE), found in Staphylococcus aureus (strain N315).